Consider the following 394-residue polypeptide: Protein DDI1 homolog 2 (394 aa).

Residues 1–81 (MLITVYCVRR…VILRQRETPE (81 aa)) form the Ubiquitin-like domain. The segment at 82-128 (ARPAAPFPGLDFSTIAVPGSSSQPAPSQPQAPPPPPPDTSSFPQGLD) is disordered. The span at 107-119 (PSQPQAPPPPPPD) shows a compositional bias: pro residues. D247 is an active-site residue. Positions 371-390 (EEIADRELAEVLQKSAEEAD) match the Ubiquitin-binding motif.

Belongs to the DDI1 family. In terms of assembly, homodimer.

The protein localises to the cytoplasm. The protein resides in the cytosol. It is found in the chromosome. Its function is as follows. Aspartic protease that mediates the cleavage of NFE2L1/NRF1 at 'Leu-104', thereby promoting release of NFE2L1/NRF1 from the endoplasmic reticulum membrane. Ubiquitination of NFE2L1/NRF1 is a prerequisite for cleavage, suggesting that DDI2 specifically recognizes and binds ubiquitinated NFE2L1/NRF1. Seems to act as a proteasomal shuttle which links the proteasome and replication fork proteins like RTF2. Required for cellular survival following replication stress. In Xenopus tropicalis (Western clawed frog), this protein is Protein DDI1 homolog 2 (ddi2).